The following is a 596-amino-acid chain: Jacalin-related lectin 46 (596 aa).

The interval 1 to 20 (MTERSEALGKDGNRRWDDKS) is disordered. 4 Jacalin-type lectin domains span residues 2–143 (TERS…YFTR), 146–291 (PTRI…YFTP), 294–439 (PTKS…HFYP), and 446–592 (AEKL…HVLP).

The protein belongs to the jacalin lectin family.

The polypeptide is Jacalin-related lectin 46 (JAL46) (Arabidopsis thaliana (Mouse-ear cress)).